The primary structure comprises 188 residues: MTLRIIAHLLALTASLAGCTSTAPIYVEQPTPIFVRQESTVLKLESFHASEQQRLLAFLWKASRGRRDALHLVISGSSRLSAEAVHQARQMGIGASNIHLLDQNDRGHLRIEAVVYHALPPICRSLSSQLLNDEFFDQPIGCSTSHNLAVMINDPRDLLGNRFVKPSDGDRAAIPVTTYRTSTGKGGL.

A signal peptide spans 1-18 (MTLRIIAHLLALTASLAG). C19 carries N-palmitoyl cysteine lipidation. C19 carries the S-diacylglycerol cysteine lipid modification.

It localises to the cell membrane. This is an uncharacterized protein from Sinorhizobium fredii (strain NBRC 101917 / NGR234).